The chain runs to 321 residues: tRNA-dihydrouridine synthase B (321 aa).

FMN is bound by residues 16-18 (PMA) and Gln-70. Residue Cys-100 is the Proton donor of the active site. Residues Lys-139, 200–202 (NGD), and 224–225 (GR) contribute to the FMN site.

This sequence belongs to the Dus family. DusB subfamily. Requires FMN as cofactor.

It carries out the reaction a 5,6-dihydrouridine in tRNA + NAD(+) = a uridine in tRNA + NADH + H(+). The enzyme catalyses a 5,6-dihydrouridine in tRNA + NADP(+) = a uridine in tRNA + NADPH + H(+). In terms of biological role, catalyzes the synthesis of 5,6-dihydrouridine (D), a modified base found in the D-loop of most tRNAs, via the reduction of the C5-C6 double bond in target uridines. In Klebsiella pneumoniae, this protein is tRNA-dihydrouridine synthase B.